We begin with the raw amino-acid sequence, 247 residues long: UPF0246 protein LCABL_22600 (247 aa).

This sequence belongs to the UPF0246 family.

This chain is UPF0246 protein LCABL_22600, found in Lacticaseibacillus casei (strain BL23) (Lactobacillus casei).